The following is a 318-amino-acid chain: Phosphatidylglycerol--prolipoprotein diacylglyceryl transferase (318 aa).

7 helical membrane passes run 23 to 43, 59 to 79, 98 to 118, 124 to 146, 192 to 212, 219 to 239, and 253 to 273; these read PLTI…GAWL, MDII…YHVI, IWEG…GAAI, GVRL…AMGR, FQPT…LLVF, LGAG…RFIF, and LRVN…VFLI. A 1,2-diacyl-sn-glycero-3-phospho-(1'-sn-glycerol) is bound at residue Arg146. Basic and acidic residues predominate over residues 293–312; that stretch reads FDTRANGHDPEKHDETDGKG. The disordered stretch occupies residues 293 to 318; sequence FDTRANGHDPEKHDETDGKGNRHHVP.

Belongs to the Lgt family.

It localises to the cell membrane. The enzyme catalyses L-cysteinyl-[prolipoprotein] + a 1,2-diacyl-sn-glycero-3-phospho-(1'-sn-glycerol) = an S-1,2-diacyl-sn-glyceryl-L-cysteinyl-[prolipoprotein] + sn-glycerol 1-phosphate + H(+). It functions in the pathway protein modification; lipoprotein biosynthesis (diacylglyceryl transfer). In terms of biological role, catalyzes the transfer of the diacylglyceryl group from phosphatidylglycerol to the sulfhydryl group of the N-terminal cysteine of a prolipoprotein, the first step in the formation of mature lipoproteins. This Paenarthrobacter aurescens (strain TC1) protein is Phosphatidylglycerol--prolipoprotein diacylglyceryl transferase.